Here is a 394-residue protein sequence, read N- to C-terminus: Acetyl-CoA acetyltransferase (394 aa).

Cys-89 functions as the Acyl-thioester intermediate in the catalytic mechanism. Residues His-350 and Cys-380 each act as proton acceptor in the active site.

This sequence belongs to the thiolase-like superfamily. Thiolase family. As to quaternary structure, homotetramer.

It localises to the cytoplasm. The catalysed reaction is 2 acetyl-CoA = acetoacetyl-CoA + CoA. The protein operates within biopolymer metabolism; poly-(R)-3-hydroxybutanoate biosynthesis. It participates in metabolic intermediate biosynthesis; (R)-mevalonate biosynthesis; (R)-mevalonate from acetyl-CoA: step 1/3. The polypeptide is Acetyl-CoA acetyltransferase (Thiocystis violacea).